Reading from the N-terminus, the 442-residue chain is C4-dicarboxylate transport protein 4 (442 aa).

6 consecutive transmembrane segments (helical) span residues 20–40, 53–73, 90–110, 160–180, 209–229, and 233–253; these read ILYV…YFYP, FIAL…VHGI, LIYF…VGEV, GDLL…AFLG, PVGA…GSLL, and ALIG…LGAI.

The protein belongs to the dicarboxylate/amino acid:cation symporter (DAACS) (TC 2.A.23) family.

It is found in the cell inner membrane. In terms of biological role, responsible for the transport of dicarboxylates such as succinate, fumarate, and malate from the periplasm across the membrane. This is C4-dicarboxylate transport protein 4 from Bradyrhizobium diazoefficiens (strain JCM 10833 / BCRC 13528 / IAM 13628 / NBRC 14792 / USDA 110).